The chain runs to 196 residues: Dephospho-CoA kinase (196 aa).

Residues 5 to 196 enclose the DPCK domain; sequence IIGLTGGIAT…QVDIALNFEL (192 aa). 13–18 is an ATP binding site; the sequence is ATGKTT.

This sequence belongs to the CoaE family.

It is found in the cytoplasm. The catalysed reaction is 3'-dephospho-CoA + ATP = ADP + CoA + H(+). The protein operates within cofactor biosynthesis; coenzyme A biosynthesis; CoA from (R)-pantothenate: step 5/5. Functionally, catalyzes the phosphorylation of the 3'-hydroxyl group of dephosphocoenzyme A to form coenzyme A. The sequence is that of Dephospho-CoA kinase from Nostoc sp. (strain PCC 7120 / SAG 25.82 / UTEX 2576).